Consider the following 366-residue polypeptide: Spermidine/putrescine import ATP-binding protein PotA (366 aa).

Residues 8–239 (IRFENVTKQF…PINKFVADFI (232 aa)) enclose the ABC transporter domain. Residue 41–48 (GPSGCGKT) coordinates ATP.

This sequence belongs to the ABC transporter superfamily. Spermidine/putrescine importer (TC 3.A.1.11.1) family. As to quaternary structure, the complex is composed of two ATP-binding proteins (PotA), two transmembrane proteins (PotB and PotC) and a solute-binding protein (PotD).

It localises to the cell membrane. It carries out the reaction ATP + H2O + polyamine-[polyamine-binding protein]Side 1 = ADP + phosphate + polyamineSide 2 + [polyamine-binding protein]Side 1.. In terms of biological role, part of the ABC transporter complex PotABCD involved in spermidine/putrescine import. Responsible for energy coupling to the transport system. In Listeria innocua serovar 6a (strain ATCC BAA-680 / CLIP 11262), this protein is Spermidine/putrescine import ATP-binding protein PotA.